We begin with the raw amino-acid sequence, 415 residues long: Histidine--tRNA ligase (415 aa).

Belongs to the class-II aminoacyl-tRNA synthetase family. As to quaternary structure, homodimer.

The protein resides in the cytoplasm. The catalysed reaction is tRNA(His) + L-histidine + ATP = L-histidyl-tRNA(His) + AMP + diphosphate + H(+). This is Histidine--tRNA ligase from Rickettsia felis (strain ATCC VR-1525 / URRWXCal2) (Rickettsia azadi).